A 162-amino-acid polypeptide reads, in one-letter code: Small ribosomal subunit protein uS5 (162 aa).

Positions 7–70 (EEKMILIRRT…YARRNMVEVP (64 aa)) constitute an S5 DRBM domain.

This sequence belongs to the universal ribosomal protein uS5 family. In terms of assembly, part of the 30S ribosomal subunit. Contacts proteins S4 and S8.

Functionally, with S4 and S12 plays an important role in translational accuracy. Located at the back of the 30S subunit body where it stabilizes the conformation of the head with respect to the body. This chain is Small ribosomal subunit protein uS5 (rpsE), found in Thermus thermophilus (strain ATCC BAA-163 / DSM 7039 / HB27).